We begin with the raw amino-acid sequence, 459 residues long: VGFKAGVKDYKLTYYTPDYETKDTDILAAFRMTPQPGVPPEEAGAAVAAESSTGTWTTVWTDGLTSLDRYKGRCYHIEPVAGEENQYIAYVAYPLDLFEEGSVTNMFTSIVGNVFGFKALRALRLDDLRIPPAYSKTFQGPPHGIQVERDKLNKYGRPLLGCTIKPKLGLSAKNYGRAVYECLRGGLDFTKDDENVNSQPFMRWRDRFLFCAEAIYKAQPETGEIKGHYLNATAGTCEEMIKRAVFARELGVPIVMHDYLTGGFTANTSLAHYCRDNGLLLHIHRAMHAVIDRQKNHGIHFRVLAKALRMSGGDHIHSGTVVGKLEGERDITLGFVDLLRDDFIEKDRSRGIYFTQDWVSLPGVLPVASGGIHVWHMPALTEIFGDDSVLQFGGGTLGHPWGNAPGAVANRVALEACVQARNEGRDLAREGNEIIREPCKWSPELAAACEVWKEIKFEF.

Residue K4 is modified to N6,N6,N6-trimethyllysine. 2 residues coordinate substrate: N113 and T163. Residue K165 is the Proton acceptor of the active site. K167 provides a ligand contact to substrate. Mg(2+) is bound by residues K191, D193, and E194. N6-carboxylysine is present on K191. The active-site Proton acceptor is H284. The substrate site is built by R285, H317, and S369.

This sequence belongs to the RuBisCO large chain family. Type I subfamily. As to quaternary structure, heterohexadecamer of 8 large chains and 8 small chains; disulfide-linked. The disulfide link is formed within the large subunit homodimers. Mg(2+) serves as cofactor. In terms of processing, the disulfide bond which can form in the large chain dimeric partners within the hexadecamer appears to be associated with oxidative stress and protein turnover.

It localises to the plastid. The protein localises to the chloroplast. The enzyme catalyses 2 (2R)-3-phosphoglycerate + 2 H(+) = D-ribulose 1,5-bisphosphate + CO2 + H2O. The catalysed reaction is D-ribulose 1,5-bisphosphate + O2 = 2-phosphoglycolate + (2R)-3-phosphoglycerate + 2 H(+). RuBisCO catalyzes two reactions: the carboxylation of D-ribulose 1,5-bisphosphate, the primary event in carbon dioxide fixation, as well as the oxidative fragmentation of the pentose substrate in the photorespiration process. Both reactions occur simultaneously and in competition at the same active site. The sequence is that of Ribulose bisphosphate carboxylase large chain from Parnassia fimbriata (Fringed grass-of-Parnassus).